A 650-amino-acid polypeptide reads, in one-letter code: Threonine--tRNA ligase (650 aa).

The 63-residue stretch at Asp-3–Thr-65 folds into the TGS domain. The catalytic stretch occupies residues Asp-248–Pro-548. The Zn(2+) site is built by Cys-349, His-400, and His-525.

Belongs to the class-II aminoacyl-tRNA synthetase family. In terms of assembly, homodimer. Zn(2+) serves as cofactor.

It localises to the cytoplasm. It carries out the reaction tRNA(Thr) + L-threonine + ATP = L-threonyl-tRNA(Thr) + AMP + diphosphate + H(+). Functionally, catalyzes the attachment of threonine to tRNA(Thr) in a two-step reaction: L-threonine is first activated by ATP to form Thr-AMP and then transferred to the acceptor end of tRNA(Thr). Also edits incorrectly charged L-seryl-tRNA(Thr). The chain is Threonine--tRNA ligase from Anaeromyxobacter dehalogenans (strain 2CP-C).